Reading from the N-terminus, the 304-residue chain is MRLPIILDTDPGIDDAAAIAAALFAPELELQLMTTVAGNVSVEKTTRNALQLLHFWNADVPLAQGASMPLVRPLRDAASVHGESGMEGYDFVEHQRQPLAKPAFQAIRDALMHAAEPITLVAIGPLTNIALLLTQYPECVFNIRRLVIMGGSAGRGNFTPNAEFNIAIDPEAAAKVFHSGLEIVMCGLDVTNRALLAADYLATLPTLNQTGKMLHALFSHYRSGSMSSGLRMHDLCAIAWLACPELFTLQPCFVAVETQGTWTAGTTVVDIEGRLGQPANALVALDIDVEGFQRWAAEVIALAP.

His233 is an active-site residue.

It belongs to the IUNH family. RihC subfamily.

Functionally, hydrolyzes both purine and pyrimidine ribonucleosides with a broad-substrate specificity. This chain is Non-specific ribonucleoside hydrolase RihC, found in Klebsiella pneumoniae (strain 342).